Reading from the N-terminus, the 756-residue chain is Ent-kaur-16-ene synthase, chloroplastic (756 aa).

Mg(2+) is bound by residues Asp-496, Asp-500, Asn-639, and Glu-647. A DDXXD motif motif is present at residues 496-500; that stretch reads DDFFD.

This sequence belongs to the terpene synthase family. Mg(2+) is required as a cofactor. In terms of tissue distribution, highly expressed in panicles and at lower levels in leaves and stems.

It is found in the plastid. The protein resides in the chloroplast. It catalyses the reaction ent-copalyl diphosphate = ent-kaur-16-ene + diphosphate. Its pathway is plant hormone biosynthesis; gibberellin biosynthesis. Catalyzes the conversion of ent-copalyl diphosphate to the gibberellin precursor ent-kaur-16-ene. The chain is Ent-kaur-16-ene synthase, chloroplastic (KS1) from Oryza sativa subsp. japonica (Rice).